Consider the following 201-residue polypeptide: UPF0301 protein Mvan_6057 (201 aa).

Belongs to the UPF0301 (AlgH) family.

The polypeptide is UPF0301 protein Mvan_6057 (Mycolicibacterium vanbaalenii (strain DSM 7251 / JCM 13017 / BCRC 16820 / KCTC 9966 / NRRL B-24157 / PYR-1) (Mycobacterium vanbaalenii)).